We begin with the raw amino-acid sequence, 112 residues long: UPF0329 protein ECU11_0080 (112 aa).

This sequence belongs to the UPF0329 family.

The chain is UPF0329 protein ECU11_0080 from Encephalitozoon cuniculi (strain GB-M1) (Microsporidian parasite).